We begin with the raw amino-acid sequence, 359 residues long: 4-hydroxy-3-methylbut-2-en-1-yl diphosphate synthase (flavodoxin) (359 aa).

[4Fe-4S] cluster contacts are provided by cysteine 264, cysteine 267, cysteine 299, and glutamate 306.

It belongs to the IspG family. It depends on [4Fe-4S] cluster as a cofactor.

The catalysed reaction is (2E)-4-hydroxy-3-methylbut-2-enyl diphosphate + oxidized [flavodoxin] + H2O + 2 H(+) = 2-C-methyl-D-erythritol 2,4-cyclic diphosphate + reduced [flavodoxin]. Its pathway is isoprenoid biosynthesis; isopentenyl diphosphate biosynthesis via DXP pathway; isopentenyl diphosphate from 1-deoxy-D-xylulose 5-phosphate: step 5/6. Its function is as follows. Converts 2C-methyl-D-erythritol 2,4-cyclodiphosphate (ME-2,4cPP) into 1-hydroxy-2-methyl-2-(E)-butenyl 4-diphosphate. The protein is 4-hydroxy-3-methylbut-2-en-1-yl diphosphate synthase (flavodoxin) of Helicobacter pylori (strain ATCC 700392 / 26695) (Campylobacter pylori).